The following is a 326-amino-acid chain: Cyclin-dependent kinase 1 (326 aa).

Residues 16–306 form the Protein kinase domain; that stretch reads FTKLEKIGEG…SKKALHHPYF (291 aa). ATP is bound by residues 22–30 and Lys45; that span reads IGEGTYGVV. The active-site Proton acceptor is Asp140.

Belongs to the protein kinase superfamily. CMGC Ser/Thr protein kinase family. CDC2/CDKX subfamily. In terms of assembly, forms a stable but non-covalent complex with a regulatory subunit and with a cyclin. Interacts with cks-1.

Its subcellular location is the nucleus. It is found in the cytoplasm. The protein resides in the cytoskeleton. It localises to the microtubule organizing center. The protein localises to the centrosome. It carries out the reaction L-seryl-[protein] + ATP = O-phospho-L-seryl-[protein] + ADP + H(+). It catalyses the reaction L-threonyl-[protein] + ATP = O-phospho-L-threonyl-[protein] + ADP + H(+). The catalysed reaction is [DNA-directed RNA polymerase] + ATP = phospho-[DNA-directed RNA polymerase] + ADP + H(+). Phosphorylation both activates and inactivates the enzyme depending on the site of phosphorylation. Its function is as follows. Plays a key role in the control of the eukaryotic cell cycle. Required for entry into S-phase and mitosis. Acts as a component of the kinase complex that phosphorylates the repetitive C-terminus of RNA polymerase II. May function in concert with npp-16 to arrest prophase blastomeres in response to anoxia. The polypeptide is Cyclin-dependent kinase 1 (Caenorhabditis briggsae).